The primary structure comprises 309 residues: tRNA dimethylallyltransferase (309 aa).

9–16 is an ATP binding site; the sequence is GPTAIGKT. 11–16 provides a ligand contact to substrate; sequence TAIGKT. Interaction with substrate tRNA regions lie at residues 34–37 and 164–168; these read DSRQ and QRMMR.

The protein belongs to the IPP transferase family. In terms of assembly, monomer. Mg(2+) is required as a cofactor.

It catalyses the reaction adenosine(37) in tRNA + dimethylallyl diphosphate = N(6)-dimethylallyladenosine(37) in tRNA + diphosphate. Functionally, catalyzes the transfer of a dimethylallyl group onto the adenine at position 37 in tRNAs that read codons beginning with uridine, leading to the formation of N6-(dimethylallyl)adenosine (i(6)A). This Flavobacterium johnsoniae (strain ATCC 17061 / DSM 2064 / JCM 8514 / BCRC 14874 / CCUG 350202 / NBRC 14942 / NCIMB 11054 / UW101) (Cytophaga johnsonae) protein is tRNA dimethylallyltransferase.